Here is a 292-residue protein sequence, read N- to C-terminus: MSEFDLTTREGRWRHFGSVDPIEGTKPTVKEEMTDLQSTHKDFLFEIEEVGIKNLVYPVVIDNYQTAGTFAFSTSLTREEKGINMSRILESVEKHYDNGLELSFNNLEAVLHTLEKHMKQSSAGVDVSGKWFFNRYSPVTNIKAVGNADVTYGLAVAGDQVTRKELTVQATVTTLCPCSKEISEYSAHNQRGVITVKMYIDPSATLPTDYKEVILDAMEANASSILYPILKRPDEKRVTERAYENPRFVEDLIRLIAADLVELDWAEGFDIECRNEESIHQHDAFAKLKYRK.

It belongs to the GTP cyclohydrolase IV family.

The catalysed reaction is GTP + H2O = 7,8-dihydroneopterin 3'-triphosphate + formate + H(+). Its pathway is cofactor biosynthesis; 7,8-dihydroneopterin triphosphate biosynthesis; 7,8-dihydroneopterin triphosphate from GTP: step 1/1. In terms of biological role, converts GTP to 7,8-dihydroneopterin triphosphate. In Staphylococcus carnosus (strain TM300), this protein is GTP cyclohydrolase FolE2.